A 178-amino-acid chain; its full sequence is Large ribosomal subunit protein uL5 (178 aa).

The protein belongs to the universal ribosomal protein uL5 family. As to quaternary structure, part of the 50S ribosomal subunit; contacts the 5S rRNA and probably tRNA. Forms a bridge to the 30S subunit in the 70S ribosome.

Its function is as follows. This is one of the proteins that bind and probably mediate the attachment of the 5S RNA into the large ribosomal subunit, where it forms part of the central protuberance. In the 70S ribosome it contacts protein S13 of the 30S subunit (bridge B1b), connecting the 2 subunits; this bridge is implicated in subunit movement. May contact the P site tRNA; the 5S rRNA and some of its associated proteins might help stabilize positioning of ribosome-bound tRNAs. This is Large ribosomal subunit protein uL5 from Archaeoglobus fulgidus (strain ATCC 49558 / DSM 4304 / JCM 9628 / NBRC 100126 / VC-16).